The sequence spans 96 residues: Small ribosomal subunit protein bS6 (96 aa).

The protein belongs to the bacterial ribosomal protein bS6 family.

Functionally, binds together with bS18 to 16S ribosomal RNA. The chain is Small ribosomal subunit protein bS6 from Streptococcus thermophilus (strain ATCC BAA-250 / LMG 18311).